The chain runs to 115 residues: Large ribosomal subunit protein uL22 (115 aa).

This sequence belongs to the universal ribosomal protein uL22 family. Part of the 50S ribosomal subunit.

This protein binds specifically to 23S rRNA; its binding is stimulated by other ribosomal proteins, e.g. L4, L17, and L20. It is important during the early stages of 50S assembly. It makes multiple contacts with different domains of the 23S rRNA in the assembled 50S subunit and ribosome. Functionally, the globular domain of the protein is located near the polypeptide exit tunnel on the outside of the subunit, while an extended beta-hairpin is found that lines the wall of the exit tunnel in the center of the 70S ribosome. This is Large ribosomal subunit protein uL22 from Limosilactobacillus fermentum (strain NBRC 3956 / LMG 18251) (Lactobacillus fermentum).